A 346-amino-acid chain; its full sequence is Methylthioribose-1-phosphate isomerase (346 aa).

Residues 46-48, Arg-89, and Gln-196 each bind substrate; that span reads RGA. The active-site Proton donor is Asp-237. 247 to 248 contacts substrate; that stretch reads NK.

This sequence belongs to the eIF-2B alpha/beta/delta subunits family. MtnA subfamily.

It catalyses the reaction 5-(methylsulfanyl)-alpha-D-ribose 1-phosphate = 5-(methylsulfanyl)-D-ribulose 1-phosphate. It participates in amino-acid biosynthesis; L-methionine biosynthesis via salvage pathway; L-methionine from S-methyl-5-thio-alpha-D-ribose 1-phosphate: step 1/6. Functionally, catalyzes the interconversion of methylthioribose-1-phosphate (MTR-1-P) into methylthioribulose-1-phosphate (MTRu-1-P). In Citrifermentans bemidjiense (strain ATCC BAA-1014 / DSM 16622 / JCM 12645 / Bem) (Geobacter bemidjiensis), this protein is Methylthioribose-1-phosphate isomerase.